The following is a 292-amino-acid chain: 33 kDa chaperonin (292 aa).

2 cysteine pairs are disulfide-bonded: cysteine 230-cysteine 232 and cysteine 263-cysteine 266.

The protein belongs to the HSP33 family. In terms of processing, under oxidizing conditions two disulfide bonds are formed involving the reactive cysteines. Under reducing conditions zinc is bound to the reactive cysteines and the protein is inactive.

The protein resides in the cytoplasm. In terms of biological role, redox regulated molecular chaperone. Protects both thermally unfolding and oxidatively damaged proteins from irreversible aggregation. Plays an important role in the bacterial defense system toward oxidative stress. The sequence is that of 33 kDa chaperonin from Escherichia coli O17:K52:H18 (strain UMN026 / ExPEC).